The following is a 59-amino-acid chain: MAEEILNREYEVEYGGKRYILRPIKAWVLQPPGKPGVVVALFRLPDGKTVRKVVMKLPP.

Belongs to the Cren7 family. Monomer. In terms of processing, methylated at multiple sites, to varying extents.

Its subcellular location is the chromosome. The protein localises to the cytoplasm. Its function is as follows. A chromatin protein, binds double-stranded DNA without sequence specificity. Constrains negative DNA supercoils. This is Chromatin protein Cren7 from Pyrobaculum arsenaticum (strain DSM 13514 / JCM 11321 / PZ6).